Reading from the N-terminus, the 98-residue chain is NADH-ubiquinone oxidoreductase chain 4L (98 aa).

Helical transmembrane passes span 1–21, 27–47, and 61–81; these read MTPTYMNIMLAFTISLLGMLT, VASLLCLEGMMMSLFIMATLI, and IILLVFAACETAVGLALLISI.

This sequence belongs to the complex I subunit 4L family. As to quaternary structure, core subunit of respiratory chain NADH dehydrogenase (Complex I) which is composed of 45 different subunits.

It localises to the mitochondrion inner membrane. The catalysed reaction is a ubiquinone + NADH + 5 H(+)(in) = a ubiquinol + NAD(+) + 4 H(+)(out). Core subunit of the mitochondrial membrane respiratory chain NADH dehydrogenase (Complex I) which catalyzes electron transfer from NADH through the respiratory chain, using ubiquinone as an electron acceptor. Part of the enzyme membrane arm which is embedded in the lipid bilayer and involved in proton translocation. The chain is NADH-ubiquinone oxidoreductase chain 4L (MT-ND4L) from Macaca fascicularis (Crab-eating macaque).